A 151-amino-acid polypeptide reads, in one-letter code: Neuroglobin (151 aa).

Residues 1–149 (MERPESELIR…VVQAMSRGWD (149 aa)) form the Globin domain. Positions 64 and 96 each coordinate heme b.

Belongs to the globin family. As to quaternary structure, monomer. Homodimer and homotetramer; disulfide-linked. Mainly monomeric but also detected as part of homodimers and homotetramers. Interacts with 14-3-3 proteins; regulates the phosphorylation of NGB. Could interact (ferrous form) with G-alpha(i) proteins (GTP-bound form). Phosphorylated during hypoxia by ERK1/ERK2. Phosphorylation regulates the heme pocket hexacoordination preventing the association of His-64 with the heme metal center. Thereby, promotes the access of dioxygen and nitrite to the heme and stimulates the nitrite reductase activity. Phosphorylation during hypoxia is stabilized by 14-3-3 proteins. In terms of tissue distribution, widely distributed throughout the adult brain, including cerebral cortex, hippocampus, thalamus, hypothalamus, olfactory bulb, and cerebellum.

It localises to the cytoplasm. It is found in the cytosol. Its subcellular location is the mitochondrion matrix. It catalyses the reaction Fe(III)-heme b-[protein] + nitric oxide + H2O = Fe(II)-heme b-[protein] + nitrite + 2 H(+). Its function is as follows. Monomeric globin with a bis-histidyl six-coordinate heme-iron atom through which it can bind dioxygen, carbon monoxide and nitric oxide. Could help transport oxygen and increase its availability to the metabolically active neuronal tissues, though its low quantity in tissues as well as its high affinity for dioxygen, which may limit its oxygen-releasing ability, argue against it. The ferrous/deoxygenated form exhibits a nitrite reductase activity and it could produce nitric oxide which in turn inhibits cellular respiration in response to hypoxia. In its ferrous/deoxygenated state, it may also exhibit GDI (Guanine nucleotide Dissociation Inhibitor) activity toward heterotrimeric G-alpha proteins, thereby regulating signal transduction to facilitate neuroprotective responses in the wake of hypoxia and associated oxidative stress. The chain is Neuroglobin from Rattus norvegicus (Rat).